The following is a 973-amino-acid chain: Short transient receptor potential channel 5 (973 aa).

Over 1 to 325 (MAQLYYKKVN…YDGFPGWRRK (325 aa)) the chain is Cytoplasmic. 4 ANK repeats span residues 30–60 (SAEEKAFLNAVEKGDYATVKQALQEAEIYYN), 69–97 (LGRSALLIAIENENLEIMELLLNHSVYVG), 98–124 (DALLYAIRKEVVGAVELLLSYRRPSGE), and 141–170 (PDITPIMLAAHTNNYEIIKLLVQKRVTIPR). Zn(2+) contacts are provided by His-172, Cys-176, Cys-178, and Cys-181. The discontinuously helical intramembrane region spans 326–360 (HWVVKLLTCMTIGFLFPMLSIAYLISPRSNLGLFI). Residues 361–363 (KKP) lie on the Cytoplasmic side of the membrane. The chain crosses the membrane as a helical span at residues 364 to 384 (FIKFICHTASYLTFLFMLLLA). Residues 385 to 404 (SQHIVRTDLHVQGPPPTVVE) are Extracellular-facing. A helical membrane pass occupies residues 405–419 (WMILPWVLGFIWGEI). 4 residues coordinate Ca(2+): Glu-418, Glu-421, Asn-436, and Asp-439. Topologically, residues 420–433 (KEMWDGGFTEYIHD) are cytoplasmic. A helical transmembrane segment spans residues 434–454 (WWNLMDFAMNSLYLATISLKI). Topologically, residues 455 to 476 (VAYVKYNGSRPREEWEMWHPTL) are extracellular. N-linked (GlcNAc...) asparagine glycosylation occurs at Asn-461. Residues 477–497 (IAEALFAISNILSSLRLISLF) traverse the membrane as a helical segment. At 498-512 (TANSHLGPLQISLGR) the chain is on the cytoplasmic side. Residues 513–535 (MLLDILKFLFIYCLVLLAFANGL) form a helical membrane-spanning segment. Residues 536 to 603 (NQLYFYYETR…HEFTEFVGAT (68 aa)) lie on the Extracellular side of the membrane. The cysteines at positions 553 and 558 are disulfide-linked. A helical transmembrane segment spans residues 604–624 (MFGTYNVISLVVLLNMLIAMM). Topologically, residues 625–973 (NNSYQLIADH…GQEEQVTTRL (349 aa)) are cytoplasmic. 2 disordered regions span residues 766 to 794 (HPRSFSTSSTELSQRDDNNDGSGGARAKS) and 810 to 837 (GPPLIRTMPRSSGAQGKSKAESSSKRSF). Residues 971–973 (TRL) are essential for binding to NHERF1 PDZ domain.

The protein belongs to the transient receptor (TC 1.A.4) family. STrpC subfamily. TRPC5 sub-subfamily. Homotetramer. Heterotetramer with TRPC1 and/or TRPC4. Each subunit in the homomeric ion channel (via ANK repeats) interacts with one copy of GTP-bound GNAI3; the interaction is direct and activates the ion channel. Interacts with TRPC4AP. Interacts with NHERF1. Interacts with MX1 and RNF24. Interacts (via C-terminus) with CABP1. Interacts with SESTD1 (via the spectrin 1 repeat). Interacts with PLSCR1. Interacts with PKD2L2. Expressed in brain with higher levels in fetal brain. Found in cerebellum and occipital pole.

Its subcellular location is the cell membrane. The catalysed reaction is Ca(2+)(in) = Ca(2+)(out). Activated by G-protein coupled receptors via direct interaction with GTP-bound GNAI3, which increases the channel sensitivity to phosphatidylinositol bisphosphate. May be activated by intracellular calcium store depletion. Calcium channel activity is enhanced by MYLK, that promotes its subcellular localization at the plasma membrane. Its function is as follows. Forms a receptor-activated non-selective calcium permeant cation channel. Mediates calcium-dependent phosphatidylserine externalization and apoptosis in neurons via its association with PLSCR1. Acts on distinct neuronal populations in the hypothalamus to regulate innate behaviors including feeding, anxiety (flight/fight/fear), socialization, and maternal care. The protein is Short transient receptor potential channel 5 (TRPC5) of Homo sapiens (Human).